Consider the following 309-residue polypeptide: Glutaminase 2 (309 aa).

Substrate-binding residues include S65, N117, E162, N169, Y193, Y245, and V263.

The protein belongs to the glutaminase family. Homotetramer.

The enzyme catalyses L-glutamine + H2O = L-glutamate + NH4(+). This is Glutaminase 2 from Bacillus subtilis (strain 168).